Consider the following 589-residue polypeptide: MNAPQENQASQDDADVLIIGAGPVGLTLANTLGMAGVRVIVAEKLPRIIDYPRAIGIDDESLRTLQAAGLSDQVQAHITPHHWMRFYTASGQCFASIEPRTDEYGWSRRNAFIQPQVDDILYRGLQRFDQVQVLLGHELHSFSQDDAGITATLKDADGVERTLRAKYLVASDGGNSLVRRMLNVAFEGRTKPNQWIVVDVRNDPLGTPHIDMHCDPQRPYVSAALPHGIRRFEFMVMPGETEEQLSRPENLAQLMRKVVADPDKVDYIRKRVYTHNARLAAQFRVDRILLAGDAAHIMPVWQGQGYNSGMRDASNLAWKLAMVVKGEARSDLLDSYEQERRDHARSMIHLSEVAGDIFAPESHTAAKVRDTVMLALNAVPPVKQYFAEMRFKPMPRYEQGVVLHHTGTGNQGVRTPFAGLLDRSGNTPLGRLLGLMAEKKESLVGRLVHGLETAASSPVGRMFIQPRVATANGHSGLLDDFVGLNFCILAWGTDPSYGMDEEALNFWQRLGARFIRAMPAGQLLHPTPTRDGVLTVGDEQGRLKDWFSAQGKSVVFVRPDRFVAALASPQEVSAVTRQMARVLHSPLEA.

Residues 15 to 44 (DVLI…VAEK) and 283 to 293 (FRVDRILLAGD) contribute to the FAD site.

It belongs to the PheA/TfdB FAD monooxygenase family. It depends on FAD as a cofactor.

It carries out the reaction 3-(3-hydroxyphenyl)propanoate + NADH + O2 + H(+) = 3-(2,3-dihydroxyphenyl)propanoate + NAD(+) + H2O. The catalysed reaction is (2E)-3-(3-hydroxyphenyl)prop-2-enoate + NADH + O2 + H(+) = (2E)-3-(2,3-dihydroxyphenyl)prop-2-enoate + NAD(+) + H2O. It functions in the pathway aromatic compound metabolism; 3-phenylpropanoate degradation. Its function is as follows. Catalyzes the insertion of one atom of molecular oxygen into position 2 of the phenyl ring of 3-(3-hydroxyphenyl)propionate (3-HPP) and hydroxycinnamic acid (3HCI). This chain is 3-(3-hydroxy-phenyl)propionate/3-hydroxycinnamic acid hydroxylase, found in Comamonas testosteroni (Pseudomonas testosteroni).